A 383-amino-acid chain; its full sequence is Seipin (383 aa).

The Cytoplasmic portion of the chain corresponds to 1-27 (MVNDPPVPALLWAQEVGHVLAGRARRL). The chain crosses the membrane as a helical span at residues 28 to 48 (MLQFGVLFCTILLLLWVSVFL). At 49–242 (YGSFYYSYMP…TCAFVGVASN (194 aa)) the chain is on the lumenal side. N-linked (GlcNAc...) asparagine glycosylation is found at Asn-88 and Asn-242. Residues 243–263 (FTFLSVIVLFSYMQWVWGAVW) traverse the membrane as a helical segment. The Cytoplasmic portion of the chain corresponds to 264 to 383 (PRHRFSLQVN…LRQRPTCSSS (120 aa)). Residues 279–383 (NSHHGAPRRI…LRQRPTCSSS (105 aa)) form a disordered region. Residue Ser-289 is modified to Phosphoserine. Polar residues predominate over residues 292 to 302 (QPGQESTQQSD). Residues 322–332 (EEEKPEKRPLN) are compositionally biased toward basic and acidic residues. 2 positions are modified to phosphoserine: Ser-342 and Ser-345. Positions 353 to 371 (TEANPPTSASASALAPETL) are enriched in low complexity.

The protein belongs to the seipin family. As to quaternary structure, undecamer (an oligomer having eleven subunits). Oligomerization is important for its function in lipid droplet formation. Interacts with LDAF1 to form an oligomeric complex. Interacts with RAB18. Interacts with ZFYVE1 in a RAB18-dependent manner. As to expression, expressed in the paraventricular nucleus of the hypothalamus (PVN) and brainstem dorsal vagal complex (DVC) in oxytocin and catecholaminergic neurons (at protein level). Highest expression detected in subcutaneous and epididymal white adipose tissue, brown adipose tissue and testis. Also expressed in brain, skeletal muscle and adrenal gland, with lower levels detected in liver, heart, kidney, spleen, lung and small intestine. In brain, detected in piriform cortex, olfactory tubercle, islands of Calleja, lateral septal nucleus, medial septal nucleus, nucleus of the vertical limb of the diagonal band, nucleus of the horizontal limb of the diagonal band, preoptic area, paraventricular thalamic nucleus, lateral globus pallidus, supraoptic nucleus, suprachiasmatic nucleus, subfornical organ, paraventricular nucleus of the hypothalamus, zona incerta, dorsomedial nucleus of the hypothalamus, ventromedial nucleus of the hypothalamus, arcuate nucleus of the hypothalamus, basomedial amygdaloid nucleus, medial amygdaloid nucleus, medial habenular, pyramidal cell layer of the hippocampus, granular layer of the dentate gyrus, posterior hypothalamus, supramammilliary nucleus, premammillary nucleus, nucleus of Darkschewitsch, Edinger-Westphal nucleus, ventral tegmental area, dorsal raphe nucleus, periaqueductal gray, median raphe nucleus, lateral parabrachial nucleus, dorsal tegmental nucleus, laterodorsal tegmental nucleus, locus coeruleus, Barrington's nucleus, medial vestibular nucleus, ambiguous nucleus, dorsal vagal complex and hypoglossal nucleus.

The protein resides in the endoplasmic reticulum membrane. The protein localises to the lipid droplet. Plays a crucial role in the formation of lipid droplets (LDs) which are storage organelles at the center of lipid and energy homeostasis. In association with LDAF1, defines the sites of LD formation in the ER. Also required for growth and maturation of small nascent LDs into larger mature LDs. Mediates the formation and/or stabilization of endoplasmic reticulum-lipid droplets (ER-LD) contacts, facilitating protein and lipid delivery from the ER into growing LDs. Regulates the maturation of ZFYVE1-positive nascent LDs and the function of the RAB18-ZFYVE1 complex in mediating the formation of ER-LD contacts. Binds anionic phospholipids including phosphatidic acid. Plays an important role in the differentiation and development of adipocytes. This Mus musculus (Mouse) protein is Seipin.